A 151-amino-acid polypeptide reads, in one-letter code: SsrA-binding protein (151 aa).

The protein belongs to the SmpB family.

The protein resides in the cytoplasm. Required for rescue of stalled ribosomes mediated by trans-translation. Binds to transfer-messenger RNA (tmRNA), required for stable association of tmRNA with ribosomes. tmRNA and SmpB together mimic tRNA shape, replacing the anticodon stem-loop with SmpB. tmRNA is encoded by the ssrA gene; the 2 termini fold to resemble tRNA(Ala) and it encodes a 'tag peptide', a short internal open reading frame. During trans-translation Ala-aminoacylated tmRNA acts like a tRNA, entering the A-site of stalled ribosomes, displacing the stalled mRNA. The ribosome then switches to translate the ORF on the tmRNA; the nascent peptide is terminated with the 'tag peptide' encoded by the tmRNA and targeted for degradation. The ribosome is freed to recommence translation, which seems to be the essential function of trans-translation. The protein is SsrA-binding protein of Lactobacillus acidophilus (strain ATCC 700396 / NCK56 / N2 / NCFM).